Consider the following 265-residue polypeptide: V0 assembly protein 1 (265 aa).

The first 24 residues, 1–24 (MVFGQLYALFIFTLSCCISKTVQA), serve as a signal peptide directing secretion. The Vacuolar portion of the chain corresponds to 25 to 223 (DSSKESSSFI…ILSSIWTEGL (199 aa)). N-linked (GlcNAc...) asparagine glycosylation is found at asparagine 69, asparagine 104, and asparagine 172. Residues 224-244 (LMCLIVSALLLFILIVALSWI) traverse the membrane as a helical segment. Residues 245–265 (SNLDITYGALEKSTNPIKKNN) are Cytoplasmic-facing. The ER retention motif motif lies at 262-265 (KKNN).

This sequence belongs to the VOA1 family. V-ATPase is a heteromultimeric enzyme composed of a peripheral catalytic V1 complex (components A to H) attached to an integral membrane V0 proton pore complex (components: a, c, c', c'', d, e, f and VOA1). Interacts with VMA21. Associates with the assembling V0 complex.

Its subcellular location is the vacuole membrane. It localises to the endoplasmic reticulum membrane. Its function is as follows. Accessory component of the V0 complex of vacuolar(H+)-ATPase (V-ATPase), a multisubunit enzyme composed of a peripheral complex (V1) that hydrolyzes ATP and a membrane integral complex (V0) that translocates protons. V-ATPase is responsible for acidifying and maintaining the pH of intracellular compartments. Functions with VMA21 in assembly of the V0 complex. The chain is V0 assembly protein 1 (VOA1) from Saccharomyces cerevisiae (strain ATCC 204508 / S288c) (Baker's yeast).